We begin with the raw amino-acid sequence, 363 residues long: MDNYTYSELLKSLQNKCDNIALIIKPEKIKQELERIEKEQEDPNFWQDVLKARDTNKEKVRLNRLLETYQKTKNSLDESTELFELAQNDNDEVTLSLLYEEAPVLEHSVQKVEIEIMLSGENDASNAIITIQPGAGGTESQDWASILYRMYLRWAERRGFKSEILDYQDGEEAGIKGVAFIIKGENAYGYLKNENGVHRLVRISPFDANAKRHTSFASVQISPELDDDIDIEIDEKDVRYDYYRASGAGGQHVNKTESAVRITHFPTGIVVQCQNDRSQHKNKASALKMLKSKLYELELEKQQSTAKNEEKSEIGWGHQIRSYVLAPYQQVKDARSNTAYSNVEAILDGDIDAILEGVLIAKA.

At Gln-251 the chain carries N5-methylglutamine.

The protein belongs to the prokaryotic/mitochondrial release factor family. Post-translationally, methylated by PrmC. Methylation increases the termination efficiency of RF2.

It is found in the cytoplasm. Peptide chain release factor 2 directs the termination of translation in response to the peptide chain termination codons UGA and UAA. This Helicobacter pylori (strain Shi470) protein is Peptide chain release factor 2.